Reading from the N-terminus, the 215-residue chain is Orotate phosphoribosyltransferase (215 aa).

Lys26 is a 5-phospho-alpha-D-ribose 1-diphosphate binding site. 34–35 (FF) serves as a coordination point for orotate. 5-phospho-alpha-D-ribose 1-diphosphate is bound by residues 72-73 (YK), Arg99, Lys100, Lys103, His105, and 124-132 (DDVITAGTA). The orotate site is built by Thr128 and Arg156.

It belongs to the purine/pyrimidine phosphoribosyltransferase family. PyrE subfamily. In terms of assembly, homodimer. It depends on Mg(2+) as a cofactor.

It carries out the reaction orotidine 5'-phosphate + diphosphate = orotate + 5-phospho-alpha-D-ribose 1-diphosphate. It functions in the pathway pyrimidine metabolism; UMP biosynthesis via de novo pathway; UMP from orotate: step 1/2. Catalyzes the transfer of a ribosyl phosphate group from 5-phosphoribose 1-diphosphate to orotate, leading to the formation of orotidine monophosphate (OMP). The protein is Orotate phosphoribosyltransferase of Shewanella oneidensis (strain ATCC 700550 / JCM 31522 / CIP 106686 / LMG 19005 / NCIMB 14063 / MR-1).